A 61-amino-acid polypeptide reads, in one-letter code: Large ribosomal subunit protein bL32 (61 aa).

Basic residues predominate over residues 1 to 16 (MAVPKRKTSPSKRGMR). The tract at residues 1–33 (MAVPKRKTSPSKRGMRRSADGLKAPTYVEDKNS) is disordered.

This sequence belongs to the bacterial ribosomal protein bL32 family.

The sequence is that of Large ribosomal subunit protein bL32 from Allorhizobium ampelinum (strain ATCC BAA-846 / DSM 112012 / S4) (Agrobacterium vitis (strain S4)).